Consider the following 263-residue polypeptide: Interleukin-15 receptor subunit alpha (263 aa).

An N-terminal signal peptide occupies residues 1–32 (MASPQLRGYGVQAIPVLLLLLLLLLLPLRVTP). Over 33-205 (GTTCPPPVSI…ISPHSSKMTK (173 aa)) the chain is Extracellular. One can recognise a Sushi domain in the interval 34–98 (TTCPPPVSIE…WTTPSLKCIR (65 aa)). 2 disulfides stabilise this stretch: Cys36–Cys78 and Cys62–Cys96. An N-linked (GlcNAc...) asparagine glycan is attached at Asn51. Residues 113–135 (TPKVTSQPESPSPSAKEPEAFSP) are compositionally biased toward low complexity. The disordered stretch occupies residues 113 to 178 (TPKVTSQPES…HKSSRAPSLA (66 aa)). The segment covering 136–145 (KSDTAMTTET) has biased composition (polar residues). A compositionally biased stretch (low complexity) spans 154 to 169 (TPSQTTSAGTTGTGSH). The chain crosses the membrane as a helical span at residues 206 to 226 (VAISTSVLLVGAGVVMAFLAW). Over 227–263 (YIKSRQPSQPCRVEVETMETVPMTVRASSKEDEDTGA) the chain is Cytoplasmic.

As to quaternary structure, the interleukin-15 receptor IL15R is a heterotrimer of IL15RA, IL2RB and IL2RG. IL15RA also self-associates. Interacts with SYK. Post-translationally, N-glycosylated and O-glycosylated. In terms of processing, a soluble form (sIL-15RA) arises from proteolytic shedding of the membrane-anchored receptor. It also binds IL15 and thus interferes with IL15 binding to the membrane receptor. In terms of tissue distribution, widely expressed.

The protein localises to the membrane. It is found in the nucleus membrane. Its subcellular location is the cell surface. The protein resides in the secreted. It localises to the extracellular space. In terms of biological role, high-affinity receptor for interleukin-15. Can signal both in cis and trans where IL15R from one subset of cells presents IL15 to neighboring IL2RG-expressing cells. In neutrophils, binds and activates kinase SYK in response to IL15 stimulation. In neutrophils, required for IL15-induced phagocytosis in a SYK-dependent manner. This chain is Interleukin-15 receptor subunit alpha (Il15ra), found in Mus musculus (Mouse).